We begin with the raw amino-acid sequence, 254 residues long: Very-long-chain (3R)-3-hydroxyacyl-CoA dehydratase 2 (254 aa).

Low complexity predominate over residues 1-10 (MAAAAATAAT). A disordered region spans residues 1 to 34 (MAAAAATAATKGNGGGSGRVGAGDSSGARKKKGP). Residue Ala2 is modified to N-acetylalanine. The Cytoplasmic segment spans residues 2-41 (AAAAATAATKGNGGGSGRVGAGDSSGARKKKGPGPVATAY). Over residues 12–21 (GNGGGSGRVG) the composition is skewed to gly residues. The chain crosses the membrane as a helical span at residues 42–60 (LVIYNVVMTAGWLVIAVGL). At 61-79 (VRAYLAKGSYHSLYYSIER) the chain is on the lumenal side. A helical membrane pass occupies residues 80-97 (PLKFFQTGALLEILHCAI). Topologically, residues 98–107 (GIVPSSVVLT) are cytoplasmic. The helical transmembrane segment at 108–125 (SFQVMSRVFLIWAVTHSV) threads the bilayer. Residues 126-130 (KEVQS) lie on the Lumenal side of the membrane. Residues 131-146 (EDSVLLFVIAWTITEI) form a helical membrane-spanning segment. Residues 147–169 (IRYSFYTFSLLNHLPYIIKWARY) are Cytoplasmic-facing. A helical membrane pass occupies residues 170 to 187 (TLFIVLYPMGVTGELLTI). Catalysis depends on residues Tyr176 and Glu183. Residues 188–217 (YAALPFVRQAGLYSISLPNKYNFSFDYHAF) lie on the Lumenal side of the membrane. A may be involved in interaction with TECR region spans residues 198-214 (GLYSISLPNKYNFSFDY). N-linked (GlcNAc...) asparagine glycosylation occurs at Asn209. Residues 218 to 235 (LILIMISYIPLFPQLYFH) form a helical membrane-spanning segment. The Cytoplasmic portion of the chain corresponds to 236 to 254 (MIHQRRKVLSHTEEHKKFE).

The protein belongs to the very long-chain fatty acids dehydratase HACD family. May interact with enzymes of the ELO family (including ELOVL1); with those enzymes that mediate condensation, the first of the four steps of the reaction cycle responsible for fatty acids elongation, may be part of a larger fatty acids elongase complex. Interacts with BCAP31. Interacts with TECR.

The protein resides in the endoplasmic reticulum membrane. The catalysed reaction is a very-long-chain (3R)-3-hydroxyacyl-CoA = a very-long-chain (2E)-enoyl-CoA + H2O. It catalyses the reaction (3R)-hydroxyhexadecanoyl-CoA = (2E)-hexadecenoyl-CoA + H2O. It carries out the reaction (3R)-hydroxyoctadecanoyl-CoA = (2E)-octadecenoyl-CoA + H2O. The enzyme catalyses (3R)-hydroxyeicosanoyl-CoA = (2E)-eicosenoyl-CoA + H2O. The catalysed reaction is (3R)-hydroxydocosanoyl-CoA = (2E)-docosenoyl-CoA + H2O. It catalyses the reaction (3R)-hydroxytetracosanoyl-CoA = (2E)-tetracosenoyl-CoA + H2O. It carries out the reaction (3R)-hydroxyhexacosanoyl-CoA = (2E)-hexacosenoyl-CoA + H2O. The protein operates within lipid metabolism; fatty acid biosynthesis. Its function is as follows. Catalyzes the third of the very long-chain fatty acids (VLCFA) elongation four-step cycle (condensation, reduction, dehydration, and reduction). This endoplasmic reticulum-elongation process is characterized by the addition of two carbons to the lipid chain through each cycle. This enzyme catalyzes the dehydration of the 3-hydroxyacyl-CoA intermediate into trans-2,3-enoyl-CoA, within each cycle of elongation. Therefore, it participates in the production of various VLCFAs involved in multiple biological processes as precursors of membrane lipids and lipid mediators. The chain is Very-long-chain (3R)-3-hydroxyacyl-CoA dehydratase 2 from Mus musculus (Mouse).